The sequence spans 53 residues: uncharacterized protein (53 aa).

It belongs to the ELIP/psbS family.

The protein resides in the plastid. It is found in the chloroplast. Functionally, possible role in chlorophyll and/or carotenoid binding. This is an uncharacterized protein from Guillardia theta (Cryptophyte).